Here is a 238-residue protein sequence, read N- to C-terminus: Uridylate kinase (238 aa).

12 to 15 (KLSG) contacts ATP. Glycine 54 contacts UMP. ATP-binding residues include glycine 55 and arginine 59. Residues aspartate 74 and 135–142 (TGNPYFTT) each bind UMP. Positions 162, 168, and 171 each coordinate ATP.

This sequence belongs to the UMP kinase family. As to quaternary structure, homohexamer.

The protein localises to the cytoplasm. It carries out the reaction UMP + ATP = UDP + ADP. It functions in the pathway pyrimidine metabolism; CTP biosynthesis via de novo pathway; UDP from UMP (UMPK route): step 1/1. Inhibited by UTP. In terms of biological role, catalyzes the reversible phosphorylation of UMP to UDP. The chain is Uridylate kinase from Nitratidesulfovibrio vulgaris (strain ATCC 29579 / DSM 644 / CCUG 34227 / NCIMB 8303 / VKM B-1760 / Hildenborough) (Desulfovibrio vulgaris).